Reading from the N-terminus, the 467-residue chain is Asparagine--tRNA ligase (467 aa).

It belongs to the class-II aminoacyl-tRNA synthetase family. Homodimer.

It is found in the cytoplasm. The enzyme catalyses tRNA(Asn) + L-asparagine + ATP = L-asparaginyl-tRNA(Asn) + AMP + diphosphate + H(+). This is Asparagine--tRNA ligase from Glaesserella parasuis serovar 5 (strain SH0165) (Haemophilus parasuis).